The sequence spans 88 residues: Small ribosomal subunit protein uS17 (88 aa).

This sequence belongs to the universal ribosomal protein uS17 family. As to quaternary structure, part of the 30S ribosomal subunit.

In terms of biological role, one of the primary rRNA binding proteins, it binds specifically to the 5'-end of 16S ribosomal RNA. This Oleidesulfovibrio alaskensis (strain ATCC BAA-1058 / DSM 17464 / G20) (Desulfovibrio alaskensis) protein is Small ribosomal subunit protein uS17.